The chain runs to 253 residues: MANLGCWMLVLFVATWSDLGLCKKRPKPGGWNTGGSRYPGQGSPGGNRYPPQGGGGWGQPHGGGWGQPHGGGWGQPHGGGWGQPHGGGWGQGGGTHSQWNKPSKPKTNMKHMAGAAAAGAVVGGLGGYMLGSAMSRPIIHFGSDYEDRYYRENMHRYPNQVYYRPMDQYSSQNNFVHDCVNITIKQHTVTTTTKGENFTETDVKMMERVVEQMCITQYERESQAYYQRGSSMVLFSSPPVILLISFLIFLIVG.

Positions 1–22 (MANLGCWMLVLFVATWSDLGLC) are cleaved as a signal peptide. Residues 23–230 (KKRPKPGGWN…ESQAYYQRGS (208 aa)) are interaction with GRB2, ERI3 and SYN1. A disordered region spans residues 26 to 108 (PKPGGWNTGG…WNKPSKPKTN (83 aa)). Repeat copies occupy residues 51–59 (PQGGGGWGQ), 60–67 (PHGGGWGQ), 68–75 (PHGGGWGQ), 76–83 (PHGGGWGQ), and 84–91 (PHGGGWGQ). The interval 51 to 91 (PQGGGGWGQPHGGGWGQPHGGGWGQPHGGGWGQPHGGGWGQ) is 5 X 8 AA tandem repeats of P-H-G-G-G-W-G-Q. A compositionally biased stretch (gly residues) spans 52–95 (QGGGGWGQPHGGGWGQPHGGGWGQPHGGGWGQPHGGGWGQGGGT). The Cu(2+) site is built by H61, G62, G63, H69, G70, G71, H77, G78, G79, H85, G86, and G87. Residues C179 and C214 are joined by a disulfide bond. Residues N181 and N197 are each glycosylated (N-linked (GlcNAc...) asparagine). The GPI-anchor amidated serine moiety is linked to residue S230. Residues 231-253 (SMVLFSSPPVILLISFLIFLIVG) constitute a propeptide, removed in mature form.

This sequence belongs to the prion family. In terms of assembly, monomer and homodimer. Has a tendency to aggregate into amyloid fibrils containing a cross-beta spine, formed by a steric zipper of superposed beta-strands. Soluble oligomers may represent an intermediate stage on the path to fibril formation. Copper binding may promote oligomerization. Interacts with GRB2, APP, ERI3/PRNPIP and SYN1. Mislocalized cytosolically exposed PrP interacts with MGRN1; this interaction alters MGRN1 subcellular location and causes lysosomal enlargement. Interacts with KIAA1191.

It is found in the cell membrane. Its subcellular location is the golgi apparatus. Its function is as follows. Its primary physiological function is unclear. Has cytoprotective activity against internal or environmental stresses. May play a role in neuronal development and synaptic plasticity. May be required for neuronal myelin sheath maintenance. May play a role in iron uptake and iron homeostasis. Soluble oligomers are toxic to cultured neuroblastoma cells and induce apoptosis (in vitro). Association with GPC1 (via its heparan sulfate chains) targets PRNP to lipid rafts. Also provides Cu(2+) or Zn(2+) for the ascorbate-mediated GPC1 deaminase degradation of its heparan sulfate side chains. This Hylobates lar (Lar gibbon) protein is Major prion protein (PRNP).